The chain runs to 494 residues: MFKFASAVILCLVAASSTQAQHNPHWWGNRNTIVHLFEWKWSDIAAECENFLGPQGFAGVQVSPVNENIISPGRPWWERYQPISYKLTTRSGDEQEFGDMVRRCNDVGIRIYVDVLLNHMSGDFDGIALGTAGSETEPSTKSFPGVPYTAQDFHPSCEITDWNDRFQVQQCELVGLKDLDQSSDWVRSKLIEFLDHLIELGVAGFRVDAAKHMAADDLSYIYSSLSDLNIEHGFPHNARPFIFQEVIDHGHETVSRDEYNQLGAVTEFRFSEEIGNAFRGNNALKWLQSWGTGWGFLPSGQALTFVDNHDNQRDMGAVLNYKSPKQYKMATAFHLAYPYGISRVMSSFAFDDHDTAPPQDEQEKIISPEFDEEGGCVNGWICEHRWRQIYAMVGFKNAVRDTEISDWWDNGDNQISFCRGNKGFLAVNNNLYDLSQELQTCLPAGVYCDVISGSLVDGSCTGKSVTVDNNGYGYIHIGSDEFDGALALHVDAKI.

An N-terminal signal peptide occupies residues M1–A20. Residue Q21 is modified to Pyrrolidone carboxylic acid. An intrachain disulfide couples C48 to C104. Ca(2+) contacts are provided by N118, Q169, and D178. Cysteines 157 and 171 form a disulfide. Residue R206 coordinates chloride. The active-site Nucleophile is D208. Residue H212 coordinates Ca(2+). The active-site Proton donor is E245. The chloride site is built by N308 and R343. Intrachain disulfides connect C376–C382, C418–C441, and C448–C460.

Belongs to the glycosyl hydrolase 13 family. In terms of assembly, monomer. The cofactor is Ca(2+). Chloride serves as cofactor.

It localises to the secreted. It carries out the reaction Endohydrolysis of (1-&gt;4)-alpha-D-glucosidic linkages in polysaccharides containing three or more (1-&gt;4)-alpha-linked D-glucose units.. This is Alpha-amylase-related protein (Amyrel) from Drosophila ercepeae (Fruit fly).